A 166-amino-acid chain; its full sequence is Regulator of ribonuclease activity A (166 aa).

It belongs to the RraA family. Homotrimer. Binds to both RNA-binding sites in the C-terminal region of Rne and to RhlB.

The protein resides in the cytoplasm. Functionally, globally modulates RNA abundance by binding to RNase E (Rne) and regulating its endonucleolytic activity. Can modulate Rne action in a substrate-dependent manner by altering the composition of the degradosome. Modulates RNA-binding and helicase activities of the degradosome. The chain is Regulator of ribonuclease activity A from Mannheimia succiniciproducens (strain KCTC 0769BP / MBEL55E).